A 275-amino-acid chain; its full sequence is Small ribosomal subunit protein uS2 (275 aa).

The interval 244–275 (REGAEASKKKATVKKKAAPRAASGESAEAAAE) is disordered. The span at 252–261 (KKATVKKKAA) shows a compositional bias: basic residues. Residues 262-275 (PRAASGESAEAAAE) show a composition bias toward low complexity.

This sequence belongs to the universal ribosomal protein uS2 family.

The polypeptide is Small ribosomal subunit protein uS2 (Thioalkalivibrio sulfidiphilus (strain HL-EbGR7)).